Here is a 1963-residue protein sequence, read N- to C-terminus: MEHEKDPGWQYLRRTREQVLEDQSKPYDSKKNVWIPDPEEGYLAGEITATKGDQVTIVTARGNEVTLKKELVQEMNPPKFEKTEDMSNLSFLNDASVLHNLRSRYAAMLIYTYSGLFCVVINPYKRLPIYTDSCARMFMGKRKTEMPPHLFAVSDEAYRNMLQDHENQSMLITGESGAGKTENTKKVICYFAAVGASQQEGGAEVDPNKKKVTLEDQIVQTNPVLEAFGNAKTVRNNNSSRFGKFIRIHFNKHGRLASCDIEHYLLEKSRVIRQAPGERCYHIFYQIYSDFRPELKKELLLDLPIKDYWFVAQAELIIDGIDDVEEFQLTDEAFDILNFSAVEKQDCYRLMSAHMHMGNMKFKQRPREEQAEPDGTDEAEKASNMYGIGCEEFLKALTKPRVKVGTEWVSKGQNCEQVNWAVGAMAKGLYSRVFNWLVKKCNLTLDQKGIDRDYFIGVLDIAGFEIFDFNSFEQLWINFVNEKLQQFFNHHMFVLEQEEYAREGIQWVFIDFGLDLQACIELIEKPLGIISMLDEECIVPKATDLTLASKLVDQHLGKHPNFEKPKPPKGKQGEAHFAMRHYAGTVRYNCLNWLEKNKDPLNDTVVSAMKQSKGNDLLVEIWQDYTTQEEAAAKAKEGGGGGKKKGKSGSFMTVSMLYRESLNNLMTMLNKTHPHFIRCIIPNEKKQSGMIDAALVLNQLTCNGVLEGIRICRKGFPNRTLHPDFVQRYAILAAKEAKSDDDKKKCAEAIMSKLVNDGSLSEEMFRIGLTKVFFKAGVLAHLEDIRDEKLATILTGFQSQIRWHLGLKDRKRRMEQRAGLLIVQRNVRSWCTLRTWEWFKLYGKVKPMLKAGKEAEELEKINDKVKALEDSLAKEEKLRKELEESSAKLVEEKTSLFTNLESTKTQLSDAEERLAKLEAQQKDASKQLSELNDQLADNEDRTADVQRAKKKIEAEVEALKKQIQDLEMSLRKAESEKQSKDHQIRSLQDEMQQQDEAIAKLNKEKKHQEEINRKLMEDLQSEEDKGNHQNKVKAKLEQTLDDLEDSLEREKRARADLDKQKRKVEGELKIAQENIDESGRQRHDLENNLKKKESELHSVSSRLEDEQALVSKLQRQIKDGQSRISELEEELENERQSRSKADRAKSDLQRELEELGEKLDEQGGATAAQVEVNKKREAELAKLRRDLEEANMNHENQLGGLRKKHTDAVAELTDQLDQLNKAKAKVEKDKAQAVRDAEDLAAQLDQETSGKLNNEKLAKQFELQLTELQSKADEQSRQLQDFTSLKGRLHSENGDLVRQLEDAESQVNQLTRLKSQLTSQLEEARRTADEEARERQTVAAQAKNYQHEAEQLQESLEEEIEGKNEILRQLSKANADIQQWKARFEGEGLLKADELEDAKRRQAQKINELQEALDAANSKNASLEKTKSRLVGDLDDAQVDVERANGVASALEKKQKGFDKIIDEWRKKTDDLAAELDGAQRDLRNTSTDLFKAKNAQEELAEVVEGLRRENKSLSQEIKDLTDQLGEGGRSVHEMQKIIRRLEIEKEELQHALDEAEAALEAEESKVLRAQVEVSQIRSEIEKRIQEKEEEFENTRKNHARALESMQASLETEAKGKAELLRIKKKLEGDINELEIALDHANKANADAQKNLKRYQEQVRELQLQVEEEQRNGADTREQFFNAEKRATLLQSEKEELLVANEAAERARKQAEYEAADARDQANEANAQVSSLTSAKRKLEGEIQAIHADLDETLNEYKAAEERSKKAIADATRLAEELRQEQEHSQHVDRLRKGLEQQLKEIQVRLDEAEAAALKGGKKVIAKLEQRVRELESELDGEQRRFQDANKNLGRADRRVRELQFQVDEDKKNFERLQDLIDKLQQKLKTQKKQVEEAEELANLNLQKYKQLTHQLEDAEERADQAENSLSKMRSKSRASASVAPGLQSSASAAVIRSPSRARASDF.

The region spanning 28–77 (DSKKNVWIPDPEEGYLAGEITATKGDQVTIVTARGNEVTLKKELVQEMNP) is the Myosin N-terminal SH3-like domain. The region spanning 81-787 (EKTEDMSNLS…VLAHLEDIRD (707 aa)) is the Myosin motor domain. N6,N6,N6-trimethyllysine is present on K125. 174–181 (GESGAGKT) is an ATP binding site. Actin-binding regions lie at residues 662–684 (LNNL…IPNE) and 766–780 (RIGL…GVLA). The tract at residues 848–1161 (MLKAGKEAEE…LEELGEKLDE (314 aa)) is alpha-helical tailpiece (S2). A coiled-coil region spans residues 848–1963 (MLKAGKEAEE…SPSRARASDF (1116 aa)). 2 stretches are compositionally biased toward basic and acidic residues: residues 970–988 (LRKA…RSLQ) and 1133–1146 (NERQ…RAKS). Disordered stretches follow at residues 970 to 990 (LRKA…LQDE) and 1125 to 1146 (SELE…RAKS). Positions 1162-1173 (QGGATAAQVEVN) are hinge. A light meromyosin (LMM) region spans residues 1162–1963 (QGGATAAQVE…SPSRARASDF (802 aa)). Disordered regions lie at residues 1317 to 1336 (LTSQ…RERQ) and 1912 to 1963 (LEDA…ASDF). The segment covering 1322 to 1336 (EEARRTADEEARERQ) has biased composition (basic and acidic residues).

Belongs to the TRAFAC class myosin-kinesin ATPase superfamily. Myosin family. As to quaternary structure, muscle myosin is a hexameric protein that consists of 2 heavy chain subunits (MHC), 2 alkali light chain subunits (MLC) and 2 regulatory light chain subunits (MLC-2). Forms a complex composed of chaperone unc-45, unc-54 and ubiquitin-protein ligase ufd-2; promotes poly-ubiquitination of unfolded unc-54. Within the complex interacts with unc-45 (via UCS domain) and ufd-2. Interacts with itr-1 (via c-terminal coiled coil domain). In terms of processing, unfolded unc-54 is poly-ubiquitinated by ufd-2.

It localises to the cytoplasm. Its subcellular location is the myofibril. Functionally, required for muscle contraction. This is Myosin-4 (unc-54) from Caenorhabditis elegans.